A 456-amino-acid polypeptide reads, in one-letter code: tRNA modification GTPase MnmE (456 aa).

Residues Arg-25, Glu-82, and Lys-121 each coordinate (6S)-5-formyl-5,6,7,8-tetrahydrofolate. Positions Gly-217 to Gly-379 constitute a TrmE-type G domain. Position 227 (Asn-227) interacts with K(+). GTP is bound by residues Asn-227 to Ser-232, Thr-246 to Thr-252, and Asp-271 to Gly-274. Residue Ser-231 participates in Mg(2+) binding. Thr-246, Ile-248, and Thr-251 together coordinate K(+). Residue Thr-252 coordinates Mg(2+). Lys-456 contacts (6S)-5-formyl-5,6,7,8-tetrahydrofolate.

It belongs to the TRAFAC class TrmE-Era-EngA-EngB-Septin-like GTPase superfamily. TrmE GTPase family. As to quaternary structure, homodimer. Heterotetramer of two MnmE and two MnmG subunits. Requires K(+) as cofactor.

It localises to the cytoplasm. Exhibits a very high intrinsic GTPase hydrolysis rate. Involved in the addition of a carboxymethylaminomethyl (cmnm) group at the wobble position (U34) of certain tRNAs, forming tRNA-cmnm(5)s(2)U34. In Saccharophagus degradans (strain 2-40 / ATCC 43961 / DSM 17024), this protein is tRNA modification GTPase MnmE.